The following is an 886-amino-acid chain: Protein suppressor of hairy wing (886 aa).

Disordered regions lie at residues 24 to 62 and 167 to 211; these read SVSP…GIKG and DEVV…KNSG. The span at 184 to 201 shows a compositional bias: acidic residues; that stretch reads VTEEEEEEEEDDLDEEGD. Residues 221–243 form a C2H2-type 1; atypical zinc finger; sequence HVCGKCYKTFRRLMSLKKHLEFC. A C2H2-type 2 zinc finger spans residues 291–314; the sequence is INCPDCPKSFKTQTSYERHIFITH. The C2H2-type 3; atypical zinc finger occupies 320-342; sequence YPCSICNANLRSEALLKLHEEQH. 9 C2H2-type zinc fingers span residues 349-367, 381-403, 414-436, 442-464, 470-492, 498-520, 524-546, 554-578, and 600-623; these read YACK…LKRH, MSCK…LKHH, YMCH…IRTH, FDCD…RRYH, YSCT…MKRH, HKCE…SKTH, FACD…VKEH, FSCT…AGDH, and TDCA…RSVH. Over residues 571 to 587 the composition is skewed to basic and acidic residues; it reads QHMDAGDHSEKSGEKPQ. The disordered stretch occupies residues 571-594; sequence QHMDAGDHSEKSGEKPQRAKRSST.

Its subcellular location is the nucleus. Functionally, component of the gypsy chromatin insulator complex which is required for the function of the gypsy chromatin insulator and other endogenous chromatin insulators. Chromatin insulators are regulatory elements which establish independent domains of transcriptional activity within eukaryotic genomes. Insulators have two defining properties; they can block the communication between an enhancer and a promoter when placed between them and can also buffer transgenes from position effect variegation (PEV). Insulators are proposed to structure the chromatin fiber into independent domains of differing transcriptional potential by promoting the formation of distinct chromatin loops. This chromatin looping may involve the formation of insulator bodies, where homotypic interactions between individual subunits of the insulator complex could promote the clustering of widely spaced insulators at the nuclear periphery. Within the gypsy insulator complex, this protein binds specifically to a region of the gypsy element located 3' of the 5' long terminal repeat (LTR), and may also mediate interaction with other endogenous insulators at sites distinct from those recognized by Cp190. Cooperates with pita and cliff to recruit Cp190 and regulate insulator function at the front-ultraabdominal (Fub) boundary. The sequence is that of Protein suppressor of hairy wing (su(Hw)) from Drosophila ananassae (Fruit fly).